Here is a 154-residue protein sequence, read N- to C-terminus: Putative esterase AF_2264 (154 aa).

Belongs to the thioesterase PaaI family.

In Archaeoglobus fulgidus (strain ATCC 49558 / DSM 4304 / JCM 9628 / NBRC 100126 / VC-16), this protein is Putative esterase AF_2264.